The chain runs to 531 residues: High affinity cysteine transporter (531 aa).

The Cytoplasmic portion of the chain corresponds to 1–54; that stretch reads MSKVDVKIGADSISSSDEILVPSRLADVTLAFMEENDAAVPEITPEQEKKLKRK. The chain crosses the membrane as a helical span at residues 55 to 75; it reads LFLTIFTFVSAINLLLYMDKA. The Lumenal segment spans residues 76–97; sequence TLSYDSILGFFEDTGLTQNTYN. A helical transmembrane segment spans residues 98–118; that stretch reads TVNTLFYVGFAIGQFPGQYLA. The Cytoplasmic portion of the chain corresponds to 119–120; that stretch reads QK. The chain crosses the membrane as a helical span at residues 121–141; it reads LPLGKFLGGLLATWTILIFLS. At 142 to 154 the chain is on the lumenal side; sequence CTAYNFSGVVALR. Residue Asn146 is glycosylated (N-linked (GlcNAc...) asparagine). Residues 155-175 form a helical membrane-spanning segment; that stretch reads FFLGLTESVVIPILITTMGMF. The Cytoplasmic portion of the chain corresponds to 176–186; the sequence is FDASERAAAQP. The chain crosses the membrane as a helical span at residues 187–207; the sequence is FFFAACMGSPIPTGFIAYGVL. The Lumenal portion of the chain corresponds to 208–218; sequence HITNPSISLWK. Residues 219 to 239 form a helical membrane-spanning segment; that stretch reads IFTIIIGGLTFIMTVVVILWF. The Cytoplasmic segment spans residues 240–285; sequence PNNPADVKFFSIQERVWIIRRVQASTGSSIEQKVFKKSQFREAMKD. Residues 286-306 traverse the membrane as a helical segment; sequence YITWLFGLFFLLQQLANNLPY. Topologically, residues 307–324 are lumenal; sequence QQNLLFEGMGGVDALGST. A helical membrane pass occupies residues 325–345; sequence LVSVAGAGFAVVCAFIATLML. The Cytoplasmic segment spans residues 346-352; that stretch reads AKWKNIS. Residues 353–373 form a helical membrane-spanning segment; sequence ALTAIFWTLPALVGSIAAAAL. At 374 to 378 the chain is on the lumenal side; the sequence is PWDNK. The helical transmembrane segment at 379–399 threads the bilayer; the sequence is IGILANICMAGQIFGIPFIIA. The Cytoplasmic segment spans residues 400–413; it reads LSWASSSASGYTKK. Residues 414 to 436 form a helical membrane-spanning segment; it reads LTRSSVSLFAMGIANIISPQIWR. The Lumenal portion of the chain corresponds to 437 to 447; that stretch reads EKDSPRFLPAW. Residues 448–468 form a helical membrane-spanning segment; it reads IVQIVLSFSLAPAILLLIHFI. Positions 469–498 form a coiled coil; sequence LKRRNNQRLKNYDENLQNYLDRIQLIESEN. At 469–531 the chain is on the cytoplasmic side; sequence LKRRNNQRLK…LENETFIYPL (63 aa). Ser500 and Ser501 each carry phosphoserine.

The protein belongs to the major facilitator superfamily. Allantoate permease family.

It localises to the cell membrane. The protein localises to the endoplasmic reticulum membrane. Functionally, high affinity cysteine-specific transporter. Major contributor to cysteine transport when cysteine, at low concentrations, is provided as the sole sulfur source. This is High affinity cysteine transporter (YCT1) from Saccharomyces cerevisiae (strain ATCC 204508 / S288c) (Baker's yeast).